The primary structure comprises 338 residues: MIHKNWQELIKPTQLVVQPGTDPARKATVVAEPLERGFGLTLGNALRRVLMSSLQGAAITSVQIDGVLHEFSSVAGVREDVTDIVLNLKGVAIRMDAEGPKRVSISAKGPRVVTAGDISESAGIDVLNKDHVICHLDDGADLYIELTVNTGKGYVAADKNRPEDAPIGLMPIDAIYSPVKKVSYDVQPTREGQVLDYDKLTLKLETDGSLSPDDAVAYAARIIQDQLSIFVNFDEPESATRQDDEDDLEFNPLLLKKVDELELSVRSANCLKNDNIVYIGDLIQKTEAEMLRTPNFGRKSLNEIKEVLSGMGLHLGMDIVDWPPDNIEELAKKYEDNF.

An alpha N-terminal domain (alpha-NTD) region spans residues 1–234; sequence MIHKNWQELI…DQLSIFVNFD (234 aa). The segment at 250 to 338 is alpha C-terminal domain (alpha-CTD); it reads FNPLLLKKVD…ELAKKYEDNF (89 aa).

Belongs to the RNA polymerase alpha chain family. As to quaternary structure, homodimer. The RNAP catalytic core consists of 2 alpha, 1 beta, 1 beta' and 1 omega subunit. When a sigma factor is associated with the core the holoenzyme is formed, which can initiate transcription.

The enzyme catalyses RNA(n) + a ribonucleoside 5'-triphosphate = RNA(n+1) + diphosphate. Functionally, DNA-dependent RNA polymerase catalyzes the transcription of DNA into RNA using the four ribonucleoside triphosphates as substrates. This Jannaschia sp. (strain CCS1) protein is DNA-directed RNA polymerase subunit alpha.